The primary structure comprises 489 residues: Transmembrane protein 161A (489 aa).

Residues methionine 1 to proline 23 form the signal peptide. Topologically, residues histidine 24–arginine 98 are extracellular. The N-linked (GlcNAc...) asparagine glycan is linked to asparagine 34. Residues tyrosine 99–phenylalanine 119 form a helical membrane-spanning segment. Residues threonine 120–asparagine 134 are Cytoplasmic-facing. A helical transmembrane segment spans residues isoleucine 135–methionine 155. Residues lysine 156–glutamate 166 are Extracellular-facing. The helical transmembrane segment at arginine 167 to valine 187 threads the bilayer. Residues arginine 188 to lysine 224 lie on the Cytoplasmic side of the membrane. The chain crosses the membrane as a helical span at residues leucine 225–proline 245. Residues glycine 246–proline 264 lie on the Extracellular side of the membrane. A helical transmembrane segment spans residues methionine 265 to isoleucine 285. The Cytoplasmic portion of the chain corresponds to arginine 286–glutamate 304. The helical transmembrane segment at leucine 305 to leucine 325 threads the bilayer. The Extracellular segment spans residues arginine 326–tyrosine 370. The helical transmembrane segment at leucine 371–methionine 391 threads the bilayer. Topologically, residues leucine 392–glycine 459 are cytoplasmic. The disordered stretch occupies residues valine 413 to glutamate 432. A helical membrane pass occupies residues isoleucine 460 to leucine 480. The Extracellular portion of the chain corresponds to tyrosine 481–serine 489.

Belongs to the TMEM161 family.

The protein localises to the membrane. In terms of biological role, may play a role in protection against oxidative stress. The protein is Transmembrane protein 161A (tmem161a) of Xenopus laevis (African clawed frog).